A 288-amino-acid polypeptide reads, in one-letter code: Protease HtpX (288 aa).

A run of 2 helical transmembrane segments spans residues 5 to 25 (IALF…VMSL) and 35 to 55 (GLLV…LLLS). His140 is a binding site for Zn(2+). Glu141 is a catalytic residue. Residue His144 participates in Zn(2+) binding. Helical transmembrane passes span 155-175 (LLQG…GGII) and 194-214 (IIVF…SMWF). Zn(2+) is bound at residue Glu219.

The protein belongs to the peptidase M48B family. Zn(2+) serves as cofactor.

It is found in the cell inner membrane. The protein is Protease HtpX of Stenotrophomonas maltophilia (strain K279a).